The sequence spans 409 residues: Epoxyqueuosine reductase (409 aa).

The tract at residues 1–23 (MDRNPELAIADARPSQDGRAAPS) is disordered. The Proton donor role is filled by Asp178. In terms of domain architecture, 4Fe-4S ferredoxin-type spans 232–261 (AAPETPGAHCGSCTRCLGACPTGAIVAPYR). 8 residues coordinate [4Fe-4S] cluster: Cys241, Cys244, Cys247, Cys251, Cys267, Cys294, Cys297, and Cys301.

The protein belongs to the QueG family. As to quaternary structure, monomer. It depends on cob(II)alamin as a cofactor. Requires [4Fe-4S] cluster as cofactor.

The protein resides in the cytoplasm. It catalyses the reaction epoxyqueuosine(34) in tRNA + AH2 = queuosine(34) in tRNA + A + H2O. It participates in tRNA modification; tRNA-queuosine biosynthesis. Its function is as follows. Catalyzes the conversion of epoxyqueuosine (oQ) to queuosine (Q), which is a hypermodified base found in the wobble positions of tRNA(Asp), tRNA(Asn), tRNA(His) and tRNA(Tyr). This Burkholderia pseudomallei (strain K96243) protein is Epoxyqueuosine reductase.